We begin with the raw amino-acid sequence, 233 residues long: Thymidylate kinase (233 aa).

10 to 17 (GVDGVGKT) contributes to the ATP binding site.

It belongs to the thymidylate kinase family.

The catalysed reaction is dTMP + ATP = dTDP + ADP. Its function is as follows. Phosphorylation of dTMP to form dTDP in both de novo and salvage pathways of dTTP synthesis. This Bifidobacterium longum subsp. infantis (strain ATCC 15697 / DSM 20088 / JCM 1222 / NCTC 11817 / S12) protein is Thymidylate kinase.